A 281-amino-acid polypeptide reads, in one-letter code: uncharacterized protein (281 aa).

This is an uncharacterized protein from Acanthamoeba polyphaga (Amoeba).